The chain runs to 362 residues: Caveolae-associated protein 4 (362 aa).

Residues 1 to 24 form a disordered region; the sequence is MEHNGSASNAGKIHQNRLSSVTED. Positions 100 to 120 form a coiled coil; it reads IKDVKARVEKQQVRVTKVETK. 3 positions are modified to phosphoserine: Ser152, Ser171, and Ser172. Basic and acidic residues predominate over residues 227–255; it reads PERRERLRQSGERLRQSGERLRQSGERFK. The interval 227–261 is disordered; sequence PERRERLRQSGERLRQSGERLRQSGERFKKSISNA. Tyr324 carries the post-translational modification Phosphotyrosine. The residue at position 334 (Thr334) is a Phosphothreonine. Ser353 is modified (phosphoserine).

Belongs to the CAVIN family. Component of the CAVIN complex composed of CAVIN1, CAVIN2, CAVIN3 and CAVIN4. Interacts with CAVIN1, CAV3, ADRA1A and ADRA1B. Interacts with CAVIN2; this augments the transactivation of NPPA. Interacts with MAPK1 and MAPK3. In terms of tissue distribution, expressed at much higher levels in cardiomyocytes than in non-cardiomyocytes.

It localises to the cytoplasm. It is found in the myofibril. Its subcellular location is the sarcomere. The protein resides in the cytosol. The protein localises to the cell membrane. It localises to the sarcolemma. It is found in the membrane. Its subcellular location is the caveola. Functionally, modulates the morphology of formed caveolae in cardiomyocytes, but is not required for caveolar formation. Facilitates the recruitment of MAPK1/3 to caveolae within cardiomyocytes and regulates alpha-1 adrenergic receptor-induced hypertrophic responses in cardiomyocytes through MAPK1/3 activation. Contributes to proper membrane localization and stabilization of caveolin-3 (CAV3) in cardiomyocytes. Induces RHOA activation and activates NPPA transcription and myofibrillar organization through the Rho/ROCK signaling pathway. This chain is Caveolae-associated protein 4, found in Rattus norvegicus (Rat).